The following is a 120-amino-acid chain: Ribosome-binding factor A (120 aa).

This sequence belongs to the RbfA family. As to quaternary structure, monomer. Binds 30S ribosomal subunits, but not 50S ribosomal subunits or 70S ribosomes.

The protein localises to the cytoplasm. One of several proteins that assist in the late maturation steps of the functional core of the 30S ribosomal subunit. Associates with free 30S ribosomal subunits (but not with 30S subunits that are part of 70S ribosomes or polysomes). Required for efficient processing of 16S rRNA. May interact with the 5'-terminal helix region of 16S rRNA. The polypeptide is Ribosome-binding factor A (Chlorobaculum parvum (strain DSM 263 / NCIMB 8327) (Chlorobium vibrioforme subsp. thiosulfatophilum)).